The chain runs to 160 residues: Cyclic pyranopterin monophosphate synthase (160 aa).

Substrate contacts are provided by residues 77 to 79 and 114 to 115; these read MCH and ME. The active site involves aspartate 129.

It belongs to the MoaC family. In terms of assembly, homohexamer; trimer of dimers.

It catalyses the reaction (8S)-3',8-cyclo-7,8-dihydroguanosine 5'-triphosphate = cyclic pyranopterin phosphate + diphosphate. It functions in the pathway cofactor biosynthesis; molybdopterin biosynthesis. Its function is as follows. Catalyzes the conversion of (8S)-3',8-cyclo-7,8-dihydroguanosine 5'-triphosphate to cyclic pyranopterin monophosphate (cPMP). This chain is Cyclic pyranopterin monophosphate synthase, found in Listeria welshimeri serovar 6b (strain ATCC 35897 / DSM 20650 / CCUG 15529 / CIP 8149 / NCTC 11857 / SLCC 5334 / V8).